Here is a 189-residue protein sequence, read N- to C-terminus: Large ribosomal subunit protein eL18 (189 aa).

This sequence belongs to the eukaryotic ribosomal protein eL18 family.

The protein resides in the cytoplasm. This chain is Large ribosomal subunit protein eL18 (RpL18), found in Aedes aegypti (Yellowfever mosquito).